Reading from the N-terminus, the 486-residue chain is NADH-quinone oxidoreductase subunit N (486 aa).

The next 14 helical transmembrane spans lie at 8–28, 38–58, 73–93, 105–125, 128–148, 169–189, 196–216, 235–255, 269–289, 304–324, 325–345, 373–393, 405–427, and 454–474; these read FIALLPLLITSATLVVVMLAV, ATLSVIGLNLALLSLLPVLGV, ACFYMALVLVSALACVTLAHA, LYLLLLLATAGGLVLVSAQHL, LFIGLELLSVPVYGMVAYAFF, FLLFGMALLYAESGTLGFAGL, HVLSGPLVSVGVGMMLVGLGF, PAPVSAFLATASKVAVFAVLL, LLNISLSVIAVASILFGNLLA, IAHLGYLLVALIASKGMAVEA, VGVYLATYVLTSLGAFGVITL, AVMTVMMLSLAGIPLTAGFIG, HLWWLIGALVLGSAIGLYYYLRV, and IMLVAIALLAFFLGVYPQPLL.

This sequence belongs to the complex I subunit 2 family. In terms of assembly, NDH-1 is composed of 13 different subunits. Subunits NuoA, H, J, K, L, M, N constitute the membrane sector of the complex.

It is found in the cell inner membrane. The enzyme catalyses a quinone + NADH + 5 H(+)(in) = a quinol + NAD(+) + 4 H(+)(out). NDH-1 shuttles electrons from NADH, via FMN and iron-sulfur (Fe-S) centers, to quinones in the respiratory chain. The immediate electron acceptor for the enzyme in this species is believed to be ubiquinone. Couples the redox reaction to proton translocation (for every two electrons transferred, four hydrogen ions are translocated across the cytoplasmic membrane), and thus conserves the redox energy in a proton gradient. This chain is NADH-quinone oxidoreductase subunit N, found in Pseudomonas aeruginosa (strain ATCC 15692 / DSM 22644 / CIP 104116 / JCM 14847 / LMG 12228 / 1C / PRS 101 / PAO1).